The sequence spans 396 residues: NADH-quinone oxidoreductase subunit D (396 aa).

It belongs to the complex I 49 kDa subunit family. NDH-1 is composed of 14 different subunits. Subunits NuoB, C, D, E, F, and G constitute the peripheral sector of the complex.

It is found in the cell inner membrane. It catalyses the reaction a quinone + NADH + 5 H(+)(in) = a quinol + NAD(+) + 4 H(+)(out). Functionally, NDH-1 shuttles electrons from NADH, via FMN and iron-sulfur (Fe-S) centers, to quinones in the respiratory chain. The immediate electron acceptor for the enzyme in this species is believed to be ubiquinone. Couples the redox reaction to proton translocation (for every two electrons transferred, four hydrogen ions are translocated across the cytoplasmic membrane), and thus conserves the redox energy in a proton gradient. In Brucella melitensis biotype 1 (strain ATCC 23456 / CCUG 17765 / NCTC 10094 / 16M), this protein is NADH-quinone oxidoreductase subunit D.